A 287-amino-acid polypeptide reads, in one-letter code: Lipoyl synthase (287 aa).

Cys38, Cys43, Cys49, Cys64, Cys68, Cys71, and Ser277 together coordinate [4Fe-4S] cluster. Residues Trp50–Arg266 enclose the Radical SAM core domain.

It belongs to the radical SAM superfamily. Lipoyl synthase family. Requires [4Fe-4S] cluster as cofactor.

It localises to the cytoplasm. It carries out the reaction [[Fe-S] cluster scaffold protein carrying a second [4Fe-4S](2+) cluster] + N(6)-octanoyl-L-lysyl-[protein] + 2 oxidized [2Fe-2S]-[ferredoxin] + 2 S-adenosyl-L-methionine + 4 H(+) = [[Fe-S] cluster scaffold protein] + N(6)-[(R)-dihydrolipoyl]-L-lysyl-[protein] + 4 Fe(3+) + 2 hydrogen sulfide + 2 5'-deoxyadenosine + 2 L-methionine + 2 reduced [2Fe-2S]-[ferredoxin]. The protein operates within protein modification; protein lipoylation via endogenous pathway; protein N(6)-(lipoyl)lysine from octanoyl-[acyl-carrier-protein]: step 2/2. Its function is as follows. Catalyzes the radical-mediated insertion of two sulfur atoms into the C-6 and C-8 positions of the octanoyl moiety bound to the lipoyl domains of lipoate-dependent enzymes, thereby converting the octanoylated domains into lipoylated derivatives. The chain is Lipoyl synthase from Chlorobium phaeobacteroides (strain DSM 266 / SMG 266 / 2430).